Here is a 127-residue protein sequence, read N- to C-terminus: Aspartate 1-decarboxylase (127 aa).

Catalysis depends on Ser-25, which acts as the Schiff-base intermediate with substrate; via pyruvic acid. Ser-25 is subject to Pyruvic acid (Ser). Thr-57 contacts substrate. Tyr-58 (proton donor) is an active-site residue. Residue 73–75 coordinates substrate; the sequence is GAA.

The protein belongs to the PanD family. Heterooctamer of four alpha and four beta subunits. Requires pyruvate as cofactor. Is synthesized initially as an inactive proenzyme, which is activated by self-cleavage at a specific serine bond to produce a beta-subunit with a hydroxyl group at its C-terminus and an alpha-subunit with a pyruvoyl group at its N-terminus.

Its subcellular location is the cytoplasm. It carries out the reaction L-aspartate + H(+) = beta-alanine + CO2. It participates in cofactor biosynthesis; (R)-pantothenate biosynthesis; beta-alanine from L-aspartate: step 1/1. Catalyzes the pyruvoyl-dependent decarboxylation of aspartate to produce beta-alanine. The protein is Aspartate 1-decarboxylase of Listeria monocytogenes serovar 1/2a (strain ATCC BAA-679 / EGD-e).